A 77-amino-acid chain; its full sequence is Acyl carrier protein (77 aa).

The 76-residue stretch at 1–76 (MAVFDDVRDV…DVVNYIEKLG (76 aa)) folds into the Carrier domain. Serine 36 carries the O-(pantetheine 4'-phosphoryl)serine modification.

Belongs to the acyl carrier protein (ACP) family. 4'-phosphopantetheine is transferred from CoA to a specific serine of apo-ACP by AcpS. This modification is essential for activity because fatty acids are bound in thioester linkage to the sulfhydryl of the prosthetic group.

Its subcellular location is the cytoplasm. It functions in the pathway lipid metabolism; fatty acid biosynthesis. Functionally, carrier of the growing fatty acid chain in fatty acid biosynthesis. The sequence is that of Acyl carrier protein from Campylobacter curvus (strain 525.92).